Consider the following 226-residue polypeptide: ATP synthase F(0) complex subunit a (226 aa).

6 consecutive transmembrane segments (helical) span residues 6 to 26 (FATFITPTILGITTLPIIMLF), 68 to 88 (WALMLMSLILFIASTNLLGLL), 97 to 117 (QLSMNIGMAIPLWLATVLMGF), 138 to 158 (VPMLIIIETISLFIQPVALAV), 164 to 184 (ITAGHLLIHLIGSATLALCSI), and 193 to 213 (FIILFLLTILELAVAMIQAYV).

Belongs to the ATPase A chain family. In terms of assembly, component of the ATP synthase complex composed at least of ATP5F1A/subunit alpha, ATP5F1B/subunit beta, ATP5MC1/subunit c (homooctomer), MT-ATP6/subunit a, MT-ATP8/subunit 8, ATP5ME/subunit e, ATP5MF/subunit f, ATP5MG/subunit g, ATP5MK/subunit k, ATP5MJ/subunit j, ATP5F1C/subunit gamma, ATP5F1D/subunit delta, ATP5F1E/subunit epsilon, ATP5PF/subunit F6, ATP5PB/subunit b, ATP5PD/subunit d, ATP5PO/subunit OSCP. ATP synthase complex consists of a soluble F(1) head domain (subunits alpha(3) and beta(3)) - the catalytic core - and a membrane F(0) domain - the membrane proton channel (subunits c, a, 8, e, f, g, k and j). These two domains are linked by a central stalk (subunits gamma, delta, and epsilon) rotating inside the F1 region and a stationary peripheral stalk (subunits F6, b, d, and OSCP). Interacts with DNAJC30; interaction is direct.

It is found in the mitochondrion inner membrane. The enzyme catalyses H(+)(in) = H(+)(out). In terms of biological role, subunit a, of the mitochondrial membrane ATP synthase complex (F(1)F(0) ATP synthase or Complex V) that produces ATP from ADP in the presence of a proton gradient across the membrane which is generated by electron transport complexes of the respiratory chain. ATP synthase complex consist of a soluble F(1) head domain - the catalytic core - and a membrane F(1) domain - the membrane proton channel. These two domains are linked by a central stalk rotating inside the F(1) region and a stationary peripheral stalk. During catalysis, ATP synthesis in the catalytic domain of F(1) is coupled via a rotary mechanism of the central stalk subunits to proton translocation. With the subunit c (ATP5MC1), forms the proton-conducting channel in the F(0) domain, that contains two crucial half-channels (inlet and outlet) that facilitate proton movement from the mitochondrial intermembrane space (IMS) into the matrix. Protons are taken up via the inlet half-channel and released through the outlet half-channel, following a Grotthuss mechanism. The chain is ATP synthase F(0) complex subunit a from Osphranter robustus (Wallaroo).